The following is an 841-amino-acid chain: Translation initiation factor IF-2 (841 aa).

5 stretches are compositionally biased toward basic and acidic residues: residues 1–12 (MSDNEIKNEAPK), 52–92 (ALKA…EATK), 114–170 (EQPK…REEA), 188–202 (READ…EANR), and 213–235 (KKGD…DVKG). 2 disordered regions span residues 1–24 (MSDN…KTTV) and 52–246 (ALKA…GSAL). The 171-residue stretch at 340-510 (TRAPVVTIMG…LLQSEVLELT (171 aa)) folds into the tr-type G domain. A G1 region spans residues 349–356 (GHVDHGKT). 349 to 356 (GHVDHGKT) serves as a coordination point for GTP. The interval 374 to 378 (GITQH) is G2. Residues 396–399 (DTPG) form a G3 region. GTP contacts are provided by residues 396–400 (DTPGH) and 450–453 (NKID). Residues 450–453 (NKID) are G4. Positions 486–488 (SAK) are G5.

The protein belongs to the TRAFAC class translation factor GTPase superfamily. Classic translation factor GTPase family. IF-2 subfamily.

It is found in the cytoplasm. Its function is as follows. One of the essential components for the initiation of protein synthesis. Protects formylmethionyl-tRNA from spontaneous hydrolysis and promotes its binding to the 30S ribosomal subunits. Also involved in the hydrolysis of GTP during the formation of the 70S ribosomal complex. This Actinobacillus pleuropneumoniae serotype 5b (strain L20) protein is Translation initiation factor IF-2.